Reading from the N-terminus, the 417-residue chain is Serine hydroxymethyltransferase 2 (417 aa).

Residues L121 and 125-127 (GHL) contribute to the (6S)-5,6,7,8-tetrahydrofolate site. N6-(pyridoxal phosphate)lysine is present on K230. 355 to 357 (SPF) contacts (6S)-5,6,7,8-tetrahydrofolate.

It belongs to the SHMT family. Homodimer. Pyridoxal 5'-phosphate is required as a cofactor.

It is found in the cytoplasm. It catalyses the reaction (6R)-5,10-methylene-5,6,7,8-tetrahydrofolate + glycine + H2O = (6S)-5,6,7,8-tetrahydrofolate + L-serine. Its pathway is one-carbon metabolism; tetrahydrofolate interconversion. The protein operates within amino-acid biosynthesis; glycine biosynthesis; glycine from L-serine: step 1/1. Functionally, catalyzes the reversible interconversion of serine and glycine with tetrahydrofolate (THF) serving as the one-carbon carrier. This reaction serves as the major source of one-carbon groups required for the biosynthesis of purines, thymidylate, methionine, and other important biomolecules. Also exhibits THF-independent aldolase activity toward beta-hydroxyamino acids, producing glycine and aldehydes, via a retro-aldol mechanism. This chain is Serine hydroxymethyltransferase 2, found in Pseudomonas fluorescens (strain ATCC BAA-477 / NRRL B-23932 / Pf-5).